The sequence spans 382 residues: Sphingoid long-chain base transporter RSB1 (382 aa).

Topologically, residues 1 to 34 are extracellular; it reads MSNATNNTLGSLLPQLEAAANSNSLYGGMVPNLR. N3 and N6 each carry an N-linked (GlcNAc...) asparagine glycan. The helical transmembrane segment at 35 to 55 threads the bilayer; it reads FNITMIVIWGILLTIHVVQLL. The Cytoplasmic segment spans residues 56-57; it reads MR. The helical transmembrane segment at 58–78 threads the bilayer; sequence QYWFSIAFICTGILEVLGFIG. Topologically, residues 79 to 90 are extracellular; the sequence is RTWSHSNVADMD. A helical transmembrane segment spans residues 91-111; it reads AFLLNMICLTIAPVFTMGGIY. Residues 112–135 are Cytoplasmic-facing; that stretch reads YQLAKLIEVYGHRFSLLPSPMAYS. Residues 136 to 156 form a helical membrane-spanning segment; sequence FIFICSDIVSLVVQAVGGGLC. Topologically, residues 157–171 are extracellular; it reads GVAVTDGTSTTTGNH. A helical transmembrane segment spans residues 172–192; it reads VFIAGLAIQVASMAIFLMLWF. At 193 to 241 the chain is on the cytoplasmic side; it reads HFLFRIYISVRWEHINSRPISLSLLKISQTEVDYLYREKFHFLRLEPKR. Residues 242–262 traverse the membrane as a helical segment; sequence WVFHYFNLAITVAVLTIFTRC. At 263-281 the chain is on the extracellular side; that stretch reads CYRLAELVVGWDGYLITHE. A helical membrane pass occupies residues 282–302; sequence WYFIILDALMMAIATVTLTIF. Topologically, residues 303 to 382 are cytoplasmic; the sequence is HPGFAFKGKS…LFSSKKKAKL (80 aa).

Belongs to the lipid-translocating exporter (LTE) (TC 9.A.26.1) family.

It is found in the cell membrane. In terms of biological role, catalyzes the ATP-dependent translocation of sphingoid long-chain bases (LCBs) from the cytoplasmic site toward the extracytoplasmic side of the membrane (flip-flop). Involved in the establishment of the functional lipid asymmetry of the plasma membrane. Regulates intracellular levels of LCBs, sphingolipid precursors that are growth inhibitory at increased levels. This chain is Sphingoid long-chain base transporter RSB1 (RSB1), found in Saccharomyces cerevisiae (strain JAY291) (Baker's yeast).